Consider the following 352-residue polypeptide: Putative GATA transcription factor 22 (352 aa).

A disordered region spans residues 27 to 53; the sequence is SLHHHLQQQQQQQQHFHHQASSNPSSL. The segment covering 33–53 has biased composition (low complexity); sequence QQQQQQQQHFHHQASSNPSSL. The Nuclear localization signal motif lies at 112–119; sequence PKKETRLK. The tract at residues 163–189 is disordered; it reads AIITTSDSSKQHTNNDQSSNLSNSERQ. A compositionally biased stretch (polar residues) spans 165–189; the sequence is ITTSDSSKQHTNNDQSSNLSNSERQ. The segment at 195–249 adopts a GATA-type zinc-finger fold; it reads DCVIRICSDCNTTKTPLWRSGPRGPKSLCNACGIRQRKARRAAMATATATAVSGV.

Belongs to the type IV zinc-finger family. Class B subfamily. In terms of assembly, forms heterodimers with GATA18. In terms of tissue distribution, expressed predominantly in leaves, and barely in stems, flowers and siliques.

The protein localises to the nucleus. Transcriptional regulator that specifically binds 5'-GATA-3' or 5'-GAT-3' motifs within gene promoters. Involved in the modulation of chloroplast development, growth and division in a cytokinin-dependent manner. Repressor of the gibberellic acid (GA) signaling pathway that regulates flowering and modulates greening, in a SOC1-dependent manner. Prevents the accumulation of SOC1 during flowering. Promotes chlorophyll biosynthesis throughout the plant, by regulating chlorophyll biosynthetic genes (e.g. HEMA1 and GUN4) and chloroplast localized glutamate synthase (e.g. GLU1). Involved in the regulation of sugar-sensing genes (e.g. HXK1, HXK2, STP13 and PLT6). Regulator of germination, senescence, elongation growth and flowering time. Influences also leaf starch content. This is Putative GATA transcription factor 22 from Arabidopsis thaliana (Mouse-ear cress).